The chain runs to 279 residues: Large ribosomal subunit protein uL2 (279 aa).

2 disordered regions span residues 33 to 58 and 223 to 279; these read LLAP…GGGH and GVAM…RKRG. 2 stretches are compositionally biased toward basic residues: residues 40 to 58 and 269 to 279; these read KGGR…GGGH and VRRRYATRKRG.

Belongs to the universal ribosomal protein uL2 family. As to quaternary structure, part of the 50S ribosomal subunit. Forms a bridge to the 30S subunit in the 70S ribosome.

Its function is as follows. One of the primary rRNA binding proteins. Required for association of the 30S and 50S subunits to form the 70S ribosome, for tRNA binding and peptide bond formation. It has been suggested to have peptidyltransferase activity; this is somewhat controversial. Makes several contacts with the 16S rRNA in the 70S ribosome. This is Large ribosomal subunit protein uL2 from Salinispora arenicola (strain CNS-205).